Reading from the N-terminus, the 154-residue chain is Ribonuclease H (154 aa).

The region spanning 9-150 (SHPHIIIYTD…ADALANKGVE (142 aa)) is the RNase H type-1 domain. The Mg(2+) site is built by aspartate 18, glutamate 56, aspartate 78, and aspartate 142.

This sequence belongs to the RNase H family. In terms of assembly, monomer. Mg(2+) is required as a cofactor.

Its subcellular location is the cytoplasm. The catalysed reaction is Endonucleolytic cleavage to 5'-phosphomonoester.. In terms of biological role, endonuclease that specifically degrades the RNA of RNA-DNA hybrids. In Polynucleobacter asymbioticus (strain DSM 18221 / CIP 109841 / QLW-P1DMWA-1) (Polynucleobacter necessarius subsp. asymbioticus), this protein is Ribonuclease H.